A 107-amino-acid chain; its full sequence is Nucleoid-associated protein A1I_00660 (107 aa).

The disordered stretch occupies residues 81 to 107; the sequence is KCDSDSQNSMSGALSGMSLPPGFKMPF.

The protein belongs to the YbaB/EbfC family. Homodimer.

Its subcellular location is the cytoplasm. The protein resides in the nucleoid. In terms of biological role, binds to DNA and alters its conformation. May be involved in regulation of gene expression, nucleoid organization and DNA protection. The sequence is that of Nucleoid-associated protein A1I_00660 from Rickettsia bellii (strain OSU 85-389).